The following is a 145-amino-acid chain: Ribonuclease VapC24 (145 aa).

A PINc domain is found at 4–123 (IDTNILLYAQ…RHHGVDEFAT (120 aa)). Mg(2+)-binding residues include Asp5 and Asp106.

Belongs to the PINc/VapC protein family. Mg(2+) is required as a cofactor.

Toxic component of a type II toxin-antitoxin (TA) system. An RNase. Its cognate antitoxin is VapB24. The protein is Ribonuclease VapC24 of Mycobacterium tuberculosis (strain CDC 1551 / Oshkosh).